The sequence spans 144 residues: Large ribosomal subunit protein uL16 (144 aa).

The protein belongs to the universal ribosomal protein uL16 family. As to quaternary structure, part of the 50S ribosomal subunit.

In terms of biological role, binds 23S rRNA and is also seen to make contacts with the A and possibly P site tRNAs. The protein is Large ribosomal subunit protein uL16 of Clostridium perfringens (strain ATCC 13124 / DSM 756 / JCM 1290 / NCIMB 6125 / NCTC 8237 / Type A).